Consider the following 67-residue polypeptide: MKQKLKTKSGAKKRFRFSKTGKVKFAHAFGSHKFLSKRPDTKRKYRKARIADDTNMLEMPRLMPYGR.

This sequence belongs to the bacterial ribosomal protein bL35 family.

In Brachyspira hyodysenteriae (strain ATCC 49526 / WA1), this protein is Large ribosomal subunit protein bL35.